The following is a 1058-amino-acid chain: Kinesin-like protein KIN-5D (1058 aa).

Residues 1-43 (MDSIQQRRGGIVSLSPAQTPRSSDKSARESRSSESNSTNRNDK) are disordered. Residues 22-32 (SSDKSARESRS) are compositionally biased toward basic and acidic residues. Positions 48 to 390 (NVQVILRCRP…LDYAHRAKNI (343 aa)) constitute a Kinesin motor domain. 134–141 (GQTGTGKT) lines the ATP pocket. A coiled-coil region spans residues 438–517 (QEEAEKKAMA…QANATIKEKE (80 aa)).

Belongs to the TRAFAC class myosin-kinesin ATPase superfamily. Kinesin family. KIN-5/BimC subfamily.

The protein resides in the cytoplasm. It localises to the cytoskeleton. Its subcellular location is the spindle. Responsible for microtubule translocation. May be important for the organization of phragmoplast-specific arrays of microtubules. Plays an essential role in stabilizing the mitotic spindle. Required during mitotic cytokinesis. The polypeptide is Kinesin-like protein KIN-5D (Arabidopsis thaliana (Mouse-ear cress)).